Here is a 134-residue protein sequence, read N- to C-terminus: Glycine cleavage system H protein (134 aa).

A Lipoyl-binding domain is found at 24–106 (TVRVGITDYA…YGAGWLLDIQ (83 aa)). Position 65 is an N6-lipoyllysine (lysine 65).

Belongs to the GcvH family. The glycine cleavage system is composed of four proteins: P, T, L and H. (R)-lipoate serves as cofactor.

The glycine cleavage system catalyzes the degradation of glycine. The H protein shuttles the methylamine group of glycine from the P protein to the T protein. This chain is Glycine cleavage system H protein, found in Mycobacterium bovis (strain ATCC BAA-935 / AF2122/97).